A 415-amino-acid polypeptide reads, in one-letter code: MFAADQTIAKFDPELAAAIAAECQRQEDHIELIASENYTSPAVMEAQGSQLTNKYAEGYPGKRFYGGCEHVDVVEQLAIDRVKQLFGAEYANVQPHSGSQANQAVYFSILKPGDTVMGMNLGHGGHLTHGSPANLSGKMFNIVAYGLNDKEEIDYDDMERVAMETKPKLIIGGASAYALRFDFERMGQIAKKVGAYFMVDMAHYAGLVAAGLYPNPVPHADFVTSTTHKTLRGPRGGIILAKAEFEKSINSNVFPTLQGGPLEHVIAAKAVAFKEALQPAFKEYQQQVLKNAAIMAKTLAERGLRIVSGRTESHVFLVDLRAKGLTGKQADALLGRAHITVNKNAIPNDPETPFVTSGIRIGSPAITTRGFKEAEAIEVANMVADVLDNPNDDALIARIAEKATALCHRFPVYAK.

Residues leucine 121 and glycine 125–leucine 127 each bind (6S)-5,6,7,8-tetrahydrofolate. The residue at position 229 (lysine 229) is an N6-(pyridoxal phosphate)lysine. Position 352–354 (threonine 352–phenylalanine 354) interacts with (6S)-5,6,7,8-tetrahydrofolate.

It belongs to the SHMT family. Homodimer. Pyridoxal 5'-phosphate is required as a cofactor.

It localises to the cytoplasm. It catalyses the reaction (6R)-5,10-methylene-5,6,7,8-tetrahydrofolate + glycine + H2O = (6S)-5,6,7,8-tetrahydrofolate + L-serine. It participates in one-carbon metabolism; tetrahydrofolate interconversion. Its pathway is amino-acid biosynthesis; glycine biosynthesis; glycine from L-serine: step 1/1. Functionally, catalyzes the reversible interconversion of serine and glycine with tetrahydrofolate (THF) serving as the one-carbon carrier. This reaction serves as the major source of one-carbon groups required for the biosynthesis of purines, thymidylate, methionine, and other important biomolecules. Also exhibits THF-independent aldolase activity toward beta-hydroxyamino acids, producing glycine and aldehydes, via a retro-aldol mechanism. The polypeptide is Serine hydroxymethyltransferase (Chromobacterium violaceum (strain ATCC 12472 / DSM 30191 / JCM 1249 / CCUG 213 / NBRC 12614 / NCIMB 9131 / NCTC 9757 / MK)).